The primary structure comprises 323 residues: Mortality factor 4-like protein 1 (323 aa).

Residues 12-62 (QEGERVLCFHGPLLYEAKCVKVAIKDKQVKYFIHYSGWNKNWDEWVPESRV) enclose the Tudor-knot domain. The tract at residues 77-143 (QKANQEQYAE…RKKRARVDPT (67 aa)) is disordered. Residues 94-227 (PGKKTSGLQQ…VAGIKEYFNV (134 aa)) form a sufficient for interaction with SIN3A region. At lysine 104 the chain carries N6-acetyllysine. The interaction with RB1-1 stretch occupies residues 125–191 (STSETPQPPR…FYLPAKKNVD (67 aa)). The segment at 149-303 (TFMNRVEVKV…FLKYLAKNSA (155 aa)) is sufficient for interaction with PHF12. One can recognise an MRG domain in the interval 152–323 (NRVEVKVKIP…APPEYHRKAV (172 aa)). The segment at 284–305 (LALLLNYLHDFLKYLAKNSATL) is interaction with RB1-2.

As to quaternary structure, component of the NuA4 histone acetyltransferase complex which contains the catalytic subunit KAT5/TIP60 and the subunits EP400, TRRAP/PAF400, BRD8/SMAP, EPC1, DMAP1/DNMAP1, RUVBL1/TIP49, RUVBL2, ING3, actin, ACTL6A/BAF53A, MORF4L1/MRG15, MORF4L2/MRGX, MRGBP, YEATS4/GAS41, VPS72/YL1 and MEAF6. The NuA4 complex interacts with MYC and the adenovirus E1A protein. MORF4L1 may also participate in the formation of NuA4 related complexes which lack the KAT5/TIP60 catalytic subunit, but which include the SWI/SNF related protein SRCAP. Component of the mSin3A histone deacetylase complex, which includes SIN3A, HDAC2, ARID4B, MORF4L1, RBBP4/RbAp48, and RBBP7/RbAp46. May also interact with PHF12 and one or more as yet undefined members of the TLE (transducin-like enhancer of split) family of transcriptional repressors. Component of the SIN3B complex, which includes SIN3B, HDAC2 or HDAC1, PHF12 and MORF4L1. Interacts with RB1 and KAT8. Interacts with the N-terminus of MRFAP1. Found in a complex composed of MORF4L1, MRFAP1 and RB1. Interacts with the entire BRCA complex, which contains BRCA1, PALB2, BRCA2 and RAD51. Interacts with PALB2. Forms a complex with MSL1 and NUPR1.

It localises to the nucleus. Its function is as follows. Component of the NuA4 histone acetyltransferase (HAT) complex which is involved in transcriptional activation of select genes principally by acetylation of nucleosomal histones H4 and H2A. This modification may both alter nucleosome - DNA interactions and promote interaction of the modified histones with other proteins which positively regulate transcription. This complex may be required for the activation of transcriptional programs associated with oncogene and proto-oncogene mediated growth induction, tumor suppressor mediated growth arrest and replicative senescence, apoptosis, and DNA repair. The NuA4 complex ATPase and helicase activities seem to be, at least in part, contributed by the association of RUVBL1 and RUVBL2 with EP400. NuA4 may also play a direct role in DNA repair when directly recruited to sites of DNA damage. As part of the SIN3B complex represses transcription and counteracts the histone acetyltransferase activity of EP300 through the recognition H3K27ac marks by PHF12 and the activity of the histone deacetylase HDAC2. SIN3B complex is recruited downstream of the constitutively active genes transcriptional start sites through interaction with histones and mitigates histone acetylation and RNA polymerase II progression within transcribed regions contributing to the regulation of transcription. Required for homologous recombination repair (HRR) and resistance to mitomycin C (MMC). Involved in the localization of PALB2, BRCA2 and RAD51, but not BRCA1, to DNA-damage foci. The protein is Mortality factor 4-like protein 1 (Morf4l1) of Rattus norvegicus (Rat).